The following is a 130-amino-acid chain: Histone H2A type 1 (130 aa).

The tract at residues 1-22 is disordered; it reads MSGRGKQGGKARAKAKSRSSRA. The residue at position 2 (Ser-2) is an N-acetylserine. Residue Ser-2 is modified to Phosphoserine; by RPS6KA5. At Arg-4 the chain carries Citrulline; alternate. Arg-4 carries the symmetric dimethylarginine; by PRMT5; alternate modification. N6-(2-hydroxyisobutyryl)lysine is present on Lys-6. Residues 7–19 show a composition bias toward basic residues; sequence QGGKARAKAKSRS. Residue Lys-10 is modified to N6-(2-hydroxyisobutyryl)lysine; alternate. N6-lactoyllysine; alternate is present on Lys-10. Position 10 is an N6-succinyllysine; alternate (Lys-10). Residues Lys-14 and Lys-16 each participate in a glycyl lysine isopeptide (Lys-Gly) (interchain with G-Cter in ubiquitin) cross-link. Lys-37 is modified (N6-(2-hydroxyisobutyryl)lysine; alternate). At Lys-37 the chain carries N6-(beta-hydroxybutyryl)lysine; alternate. The residue at position 37 (Lys-37) is an N6-crotonyllysine; alternate. 2 positions are modified to N6-(2-hydroxyisobutyryl)lysine: Lys-75 and Lys-76. Residue Lys-96 is modified to N6-(2-hydroxyisobutyryl)lysine; alternate. The residue at position 96 (Lys-96) is an N6-succinyllysine; alternate. Lys-96 carries the N6-glutaryllysine; alternate modification. Lys-100 carries the N6-glutaryllysine modification. The residue at position 105 (Gln-105) is an N5-methylglutamine. Position 119 is an N6-(2-hydroxyisobutyryl)lysine; alternate (Lys-119). Lys-119 and Lys-120 each carry N6-crotonyllysine; alternate. 2 positions are modified to N6-glutaryllysine; alternate: Lys-119 and Lys-120. Lys-120 participates in a covalent cross-link: Glycyl lysine isopeptide (Lys-Gly) (interchain with G-Cter in ubiquitin); alternate. A Phosphothreonine; by DCAF1 modification is found at Thr-121. Lys-126 carries the N6-crotonyllysine; alternate modification. Position 126 is an N6-glutaryllysine; alternate (Lys-126).

This sequence belongs to the histone H2A family. In terms of assembly, the nucleosome is a histone octamer containing two molecules each of H2A, H2B, H3 and H4 assembled in one H3-H4 heterotetramer and two H2A-H2B heterodimers. The octamer wraps approximately 147 bp of DNA. Interacts with VRK1; the interaction is mediated by the nucleosome acidic patch, a cluster of negatively charged residues of H2A and H2B forming a cleft within the nucleosome core. In terms of processing, deiminated on Arg-4 in granulocytes upon calcium entry. Post-translationally, monoubiquitination of Lys-120 (H2AK119Ub) by RING1, TRIM37 and RNF2/RING2 complex gives a specific tag for epigenetic transcriptional repression and participates in X chromosome inactivation of female mammals. It is involved in the initiation of both imprinted and random X inactivation. Ubiquitinated H2A is enriched in inactive X chromosome chromatin. Ubiquitination of H2A functions downstream of methylation of 'Lys-27' of histone H3 (H3K27me). H2AK119Ub by RNF2/RING2 can also be induced by ultraviolet and may be involved in DNA repair. Following DNA double-strand breaks (DSBs), it is ubiquitinated through 'Lys-63' linkage of ubiquitin moieties by the E2 ligase UBE2N and the E3 ligases RNF8 and RNF168, leading to the recruitment of repair proteins to sites of DNA damage. Ubiquitination at Lys-14 and Lys-16 (H2AK13Ub and H2AK15Ub, respectively) in response to DNA damage is initiated by RNF168 that mediates monoubiquitination at these 2 sites, and 'Lys-63'-linked ubiquitin are then conjugated to monoubiquitin; RNF8 is able to extend 'Lys-63'-linked ubiquitin chains in vitro. H2AK119Ub and ionizing radiation-induced 'Lys-63'-linked ubiquitination (H2AK13Ub and H2AK15Ub) are distinct events. Phosphorylation on Ser-2 (H2AS1ph) is enhanced during mitosis. Phosphorylation on Ser-2 by RPS6KA5/MSK1 directly represses transcription. Acetylation of H3 inhibits Ser-2 phosphorylation by RPS6KA5/MSK1. Phosphorylation at Thr-121 (H2AT120ph) by DCAF1 is present in the regulatory region of many tumor suppresor genes and down-regulates their transcription. In terms of processing, symmetric dimethylation on Arg-4 by the PRDM1/PRMT5 complex may play a crucial role in the germ-cell lineage. Post-translationally, glutamine methylation at Gln-105 (H2AQ104me) by FBL is specifically dedicated to polymerase I. It is present at 35S ribosomal DNA locus and impairs binding of the FACT complex. Crotonylation (Kcr) is specifically present in male germ cells and marks testis-specific genes in post-meiotic cells, including X-linked genes that escape sex chromosome inactivation in haploid cells. Crotonylation marks active promoters and enhancers and confers resistance to transcriptional repressors. It is also associated with post-meiotically activated genes on autosomes. In terms of processing, lactylated in macrophages by EP300/P300 by using lactoyl-CoA directly derived from endogenous or exogenous lactate, leading to stimulates gene transcription.

It localises to the nucleus. The protein resides in the chromosome. In terms of biological role, core component of nucleosome. Nucleosomes wrap and compact DNA into chromatin, limiting DNA accessibility to the cellular machineries which require DNA as a template. Histones thereby play a central role in transcription regulation, DNA repair, DNA replication and chromosomal stability. DNA accessibility is regulated via a complex set of post-translational modifications of histones, also called histone code, and nucleosome remodeling. This is Histone H2A type 1 from Rattus norvegicus (Rat).